We begin with the raw amino-acid sequence, 340 residues long: Phosphoribosylformylglycinamidine cyclo-ligase (340 aa).

This sequence belongs to the AIR synthase family.

The protein localises to the cytoplasm. It catalyses the reaction 2-formamido-N(1)-(5-O-phospho-beta-D-ribosyl)acetamidine + ATP = 5-amino-1-(5-phospho-beta-D-ribosyl)imidazole + ADP + phosphate + H(+). It functions in the pathway purine metabolism; IMP biosynthesis via de novo pathway; 5-amino-1-(5-phospho-D-ribosyl)imidazole from N(2)-formyl-N(1)-(5-phospho-D-ribosyl)glycinamide: step 2/2. This chain is Phosphoribosylformylglycinamidine cyclo-ligase, found in Streptococcus mutans serotype c (strain ATCC 700610 / UA159).